We begin with the raw amino-acid sequence, 343 residues long: N-acetyl-gamma-glutamyl-phosphate reductase (343 aa).

The active site involves cysteine 150.

It belongs to the NAGSA dehydrogenase family. Type 1 subfamily.

The protein resides in the cytoplasm. It carries out the reaction N-acetyl-L-glutamate 5-semialdehyde + phosphate + NADP(+) = N-acetyl-L-glutamyl 5-phosphate + NADPH + H(+). It participates in amino-acid biosynthesis; L-arginine biosynthesis; N(2)-acetyl-L-ornithine from L-glutamate: step 3/4. Catalyzes the NADPH-dependent reduction of N-acetyl-5-glutamyl phosphate to yield N-acetyl-L-glutamate 5-semialdehyde. The sequence is that of N-acetyl-gamma-glutamyl-phosphate reductase from Nitrosococcus oceani (strain ATCC 19707 / BCRC 17464 / JCM 30415 / NCIMB 11848 / C-107).